The sequence spans 397 residues: 1-deoxy-D-xylulose 5-phosphate reductoisomerase (397 aa).

Thr-12, Gly-13, Ser-14, Ile-15, Gly-38, Lys-39, Asn-40, and Asn-126 together coordinate NADPH. Residue Lys-127 coordinates 1-deoxy-D-xylulose 5-phosphate. Glu-128 provides a ligand contact to NADPH. Asp-152 contributes to the Mn(2+) binding site. Positions 153, 154, 188, and 211 each coordinate 1-deoxy-D-xylulose 5-phosphate. Glu-154 is a Mn(2+) binding site. Gly-217 is a binding site for NADPH. 1-deoxy-D-xylulose 5-phosphate contacts are provided by Ser-224, Asn-229, Lys-230, and Glu-233. Glu-233 contacts Mn(2+).

It belongs to the DXR family. Mg(2+) serves as cofactor. The cofactor is Mn(2+).

It catalyses the reaction 2-C-methyl-D-erythritol 4-phosphate + NADP(+) = 1-deoxy-D-xylulose 5-phosphate + NADPH + H(+). Its pathway is isoprenoid biosynthesis; isopentenyl diphosphate biosynthesis via DXP pathway; isopentenyl diphosphate from 1-deoxy-D-xylulose 5-phosphate: step 1/6. Its function is as follows. Catalyzes the NADPH-dependent rearrangement and reduction of 1-deoxy-D-xylulose-5-phosphate (DXP) to 2-C-methyl-D-erythritol 4-phosphate (MEP). The sequence is that of 1-deoxy-D-xylulose 5-phosphate reductoisomerase from Haemophilus influenzae (strain 86-028NP).